Here is a 169-residue protein sequence, read N- to C-terminus: Cyclic pyranopterin monophosphate synthase (169 aa).

Residues 83–85 and 121–122 each bind substrate; these read LCH and ME. Asp-136 is an active-site residue.

This sequence belongs to the MoaC family. Homohexamer; trimer of dimers.

It carries out the reaction (8S)-3',8-cyclo-7,8-dihydroguanosine 5'-triphosphate = cyclic pyranopterin phosphate + diphosphate. Its pathway is cofactor biosynthesis; molybdopterin biosynthesis. Functionally, catalyzes the conversion of (8S)-3',8-cyclo-7,8-dihydroguanosine 5'-triphosphate to cyclic pyranopterin monophosphate (cPMP). The protein is Cyclic pyranopterin monophosphate synthase of Rhodospirillum centenum (strain ATCC 51521 / SW).